Here is a 168-residue protein sequence, read N- to C-terminus: uncharacterized protein (168 aa).

Residues 36–56 (LNWWQLIVVVGIAISGIAAIA) form a helical membrane-spanning segment. A glycan (N-linked (GlcNAc...) asparagine; by host) is linked at asparagine 74. Helical transmembrane passes span 86-106 (FIIIIVLSCLAVVGGIILAWL), 115-135 (KLLTMGLTTGGILGILYALTI), and 143-163 (MVKLGISWVSLLAFVLLGFFI). Asparagine 164 carries an N-linked (GlcNAc...) asparagine; by host glycan.

It localises to the membrane. This is an uncharacterized protein from Acanthamoeba polyphaga mimivirus (APMV).